The primary structure comprises 146 residues: Probable actin-related protein 2/3 complex subunit 5 (146 aa).

It belongs to the ARPC5 family. Component of the Arp2/3 complex composed of ARP2, ARP3, ARPC1B/p41-ARC, ARPC2/p34-ARC, ARPC3/p21-ARC, ARPC4/p20-ARC and ARPC5/p16-ARC.

The protein localises to the cytoplasm. It is found in the cytoskeleton. Its function is as follows. Functions as a component of the Arp2/3 complex which is involved in regulation of actin polymerization and together with an activating nucleation-promoting factor (NPF) mediates the formation of branched actin networks. The polypeptide is Probable actin-related protein 2/3 complex subunit 5 (Caenorhabditis elegans).